A 426-amino-acid chain; its full sequence is MLDPALLRHQPADLAERLRTSRGFELDVSALESLEADRKRIQVRTQELQSLRNSRSKAIGQAKAKGEDVSAIMAEVAAFADELKASEVALDELREKIEAISMGIPNLPADDVPAGADENDNVEQSRWGTPRQFDFKVLDHVELGARNGWLDGETAAKLSGSRFTVLRGPIARLHRALAQFMVDLHTGEHGYEETNVPLLVNADSLRGTSQLPKFEDDLFKTAVGDSTRYLIPTSEVPLTNIVRDEIVDAERLPLRMTAHSMCFRAEAGSGGRDVRGMIRQHQFEKVELVSISRPEDSDAEHQRMTRCAEVVLEKLGLPYRKVLLCTGDMGFSAVKTYDLEVWLPSQETYREISSCSNCGDFQARRMQARWRNPATGKPELAHTLNGSGVAVGRAMIAVMENYQNADGSITVPEALRPYMGGLETIA.

L-serine is bound at residue 233–235 (TSE). Position 264-266 (264-266 (RAE)) interacts with ATP. Residue Glu287 participates in L-serine binding. Position 351 to 354 (351 to 354 (EISS)) interacts with ATP. L-serine is bound at residue Ser387.

It belongs to the class-II aminoacyl-tRNA synthetase family. Type-1 seryl-tRNA synthetase subfamily. In terms of assembly, homodimer. The tRNA molecule binds across the dimer.

It localises to the cytoplasm. It carries out the reaction tRNA(Ser) + L-serine + ATP = L-seryl-tRNA(Ser) + AMP + diphosphate + H(+). The catalysed reaction is tRNA(Sec) + L-serine + ATP = L-seryl-tRNA(Sec) + AMP + diphosphate + H(+). Its pathway is aminoacyl-tRNA biosynthesis; selenocysteinyl-tRNA(Sec) biosynthesis; L-seryl-tRNA(Sec) from L-serine and tRNA(Sec): step 1/1. Its function is as follows. Catalyzes the attachment of serine to tRNA(Ser). Is also able to aminoacylate tRNA(Sec) with serine, to form the misacylated tRNA L-seryl-tRNA(Sec), which will be further converted into selenocysteinyl-tRNA(Sec). The sequence is that of Serine--tRNA ligase from Stenotrophomonas maltophilia (strain K279a).